The sequence spans 377 residues: Gap junction gamma-1 protein (377 aa).

At 1-18 (MSWSFLTRLLEEINNHST) the chain is on the cytoplasmic side. Residues 19–39 (FVGKIWLTVLIIFRIVLTAVG) form a helical membrane-spanning segment. Over 40–75 (GESIYYDEQSKFTCNTHQPGCENVCYDAFAPLSHVR) the chain is Extracellular. A helical transmembrane segment spans residues 76-96 (FWVFQIILITTPSIMYLGFAM). The Cytoplasmic segment spans residues 97 to 174 (HRIARQPDEQ…RRIKQDGLMK (78 aa)). The disordered stretch occupies residues 129–163 (DYEEAEDNQEEDPMICEEEEPEKDSEKGDKKKHDG). Acidic residues predominate over residues 131-151 (EEAEDNQEEDPMICEEEEPEK). Residues 175 to 197 (VYVLQLLFRSVFEVGFLMGQYVL) traverse the membrane as a helical segment. The Extracellular segment spans residues 198-228 (YGFEVIPFFVCSRNPCPHTVDCFVSRPTEKT). A helical transmembrane segment spans residues 229 to 249 (IFLLIMYAVSALCLFLNLCEL). Over 250–377 (FHLGIGGIRD…GVGSREKSGL (128 aa)) the chain is Cytoplasmic. 2 disordered regions span residues 266–286 (KEIQESRKKKPSAPPNYHSVL) and 341–377 (AHASRSSSPEANSIAAEQNRLNLAQEKGVGSREKSGL). Over residues 344 to 362 (SRSSSPEANSIAAEQNRLN) the composition is skewed to polar residues.

Belongs to the connexin family. Gamma-type subfamily. In terms of assembly, a connexon is composed of a hexamer of connexins.

The protein resides in the cell membrane. The protein localises to the cell junction. Its subcellular location is the gap junction. Functionally, one gap junction consists of a cluster of closely packed pairs of transmembrane channels, the connexons, through which materials of low MW diffuse from one cell to a neighboring cell. This is Gap junction gamma-1 protein (gjc1) from Xenopus laevis (African clawed frog).